Reading from the N-terminus, the 312-residue chain is DNA-directed RNA polymerase subunit alpha (312 aa).

The tract at residues 1–226 (MIEFEKPRIE…EHLDIFVNLT (226 aa)) is alpha N-terminal domain (alpha-NTD). The segment at 243–312 (KEKMLEMTIE…DLGLGLRKDD (70 aa)) is alpha C-terminal domain (alpha-CTD).

The protein belongs to the RNA polymerase alpha chain family. Homodimer. The RNAP catalytic core consists of 2 alpha, 1 beta, 1 beta' and 1 omega subunit. When a sigma factor is associated with the core the holoenzyme is formed, which can initiate transcription.

The catalysed reaction is RNA(n) + a ribonucleoside 5'-triphosphate = RNA(n+1) + diphosphate. Functionally, DNA-dependent RNA polymerase catalyzes the transcription of DNA into RNA using the four ribonucleoside triphosphates as substrates. This Enterococcus faecalis (strain ATCC 700802 / V583) protein is DNA-directed RNA polymerase subunit alpha.